Consider the following 213-residue polypeptide: Uridine kinase (213 aa).

Residue 14–21 (GASASGKS) participates in ATP binding.

The protein belongs to the uridine kinase family.

The protein localises to the cytoplasm. The catalysed reaction is uridine + ATP = UMP + ADP + H(+). It carries out the reaction cytidine + ATP = CMP + ADP + H(+). The protein operates within pyrimidine metabolism; CTP biosynthesis via salvage pathway; CTP from cytidine: step 1/3. Its pathway is pyrimidine metabolism; UMP biosynthesis via salvage pathway; UMP from uridine: step 1/1. This chain is Uridine kinase, found in Vibrio campbellii (strain ATCC BAA-1116).